Here is a 681-residue protein sequence, read N- to C-terminus: Probable glutamate carboxypeptidase LAMP1 (681 aa).

The Cytoplasmic segment spans residues 1-6 (MSKSKS). The helical; Signal-anchor for type II membrane protein transmembrane segment at 7-24 (LAFVIAALSYSFFSLFSS) threads the bilayer. Residues 25 to 681 (PPKSHYHELF…ASLVLKGELI (657 aa)) are Extracellular-facing. N-linked (GlcNAc...) asparagine glycosylation is found at asparagine 42, asparagine 140, asparagine 166, and asparagine 299. Positions 241 to 527 (SVDGCERLSD…SVLGLVALRL (287 aa)) are catalytic. Residues histidine 333 and aspartate 343 each coordinate Zn(2+). The active-site Nucleophile is the glutamate 380. Residues glutamate 381 and aspartate 409 each coordinate Zn(2+). Residue asparagine 441 is glycosylated (N-linked (GlcNAc...) asparagine). Histidine 493 is a binding site for Zn(2+). Asparagine 536 carries an N-linked (GlcNAc...) asparagine glycan.

Belongs to the peptidase M28 family. M28B subfamily. It depends on Zn(2+) as a cofactor.

The protein resides in the endoplasmic reticulum membrane. It catalyses the reaction Release of an unsubstituted, C-terminal glutamyl residue, typically from Ac-Asp-Glu or folylpoly-gamma-glutamates.. Acts in association with AMP1 to suppress ectopic stem cell niche formation in the shoot apical meristem (SAM) independently of cytokinin signaling pathway. The sequence is that of Probable glutamate carboxypeptidase LAMP1 from Arabidopsis thaliana (Mouse-ear cress).